A 100-amino-acid chain; its full sequence is Nucleoid-associated protein jhp_0031 (100 aa).

The protein belongs to the YbaB/EbfC family. In terms of assembly, homodimer.

It localises to the cytoplasm. The protein localises to the nucleoid. Its function is as follows. Binds to DNA and alters its conformation. May be involved in regulation of gene expression, nucleoid organization and DNA protection. The chain is Nucleoid-associated protein jhp_0031 from Helicobacter pylori (strain J99 / ATCC 700824) (Campylobacter pylori J99).